A 321-amino-acid polypeptide reads, in one-letter code: Putative ribose-phosphate pyrophosphokinase 2 (321 aa).

Residues 41-43 and 100-101 each bind ATP; these read DGE and RQ. H134 contacts Mg(2+). D-ribose 5-phosphate contacts are provided by residues D223 and 227 to 231; that span reads NTGVT.

It belongs to the ribose-phosphate pyrophosphokinase family. Class I subfamily. As to quaternary structure, homohexamer. Mg(2+) serves as cofactor.

The protein localises to the cytoplasm. The catalysed reaction is D-ribose 5-phosphate + ATP = 5-phospho-alpha-D-ribose 1-diphosphate + AMP + H(+). Its pathway is metabolic intermediate biosynthesis; 5-phospho-alpha-D-ribose 1-diphosphate biosynthesis; 5-phospho-alpha-D-ribose 1-diphosphate from D-ribose 5-phosphate (route I): step 1/1. Its function is as follows. Involved in the biosynthesis of the central metabolite phospho-alpha-D-ribosyl-1-pyrophosphate (PRPP) via the transfer of pyrophosphoryl group from ATP to 1-hydroxyl of ribose-5-phosphate (Rib-5-P). The sequence is that of Putative ribose-phosphate pyrophosphokinase 2 from Lactococcus lactis subsp. lactis (strain IL1403) (Streptococcus lactis).